A 658-amino-acid chain; its full sequence is DNA mismatch repair protein MutL (658 aa).

Basic and acidic residues predominate over residues Arg114–Lys130. Disordered stretches follow at residues Arg114–Ala138 and Pro355–Ser405.

Belongs to the DNA mismatch repair MutL/HexB family.

This protein is involved in the repair of mismatches in DNA. It is required for dam-dependent methyl-directed DNA mismatch repair. May act as a 'molecular matchmaker', a protein that promotes the formation of a stable complex between two or more DNA-binding proteins in an ATP-dependent manner without itself being part of a final effector complex. The polypeptide is DNA mismatch repair protein MutL (Neisseria gonorrhoeae (strain ATCC 700825 / FA 1090)).